The following is a 487-amino-acid chain: Adenylosuccinate synthetase, chloroplastic (487 aa).

A chloroplast-targeting transit peptide spans 1-46 (MSLSTVNHAAAAAAAAGSGKSFSAAAPAAPSVRLPRTRAPAAAAVS). GTP contacts are provided by residues 74 to 80 (GDEGKGK) and 102 to 104 (GHT). Aspartate 75 functions as the Proton acceptor in the catalytic mechanism. 2 residues coordinate Mg(2+): aspartate 75 and glycine 102. Residues 75 to 78 (DEGK), 100 to 103 (NAGH), threonine 192, arginine 206, glutamine 286, threonine 301, and arginine 365 contribute to the IMP site. Histidine 103 (proton donor) is an active-site residue. Residue 361–367 (TTTGRPR) participates in substrate binding. Residues arginine 367, 393–395 (KLD), and 476–478 (GVG) contribute to the GTP site.

It belongs to the adenylosuccinate synthetase family. In terms of assembly, homodimer. Requires Mg(2+) as cofactor.

It localises to the plastid. It is found in the chloroplast. The enzyme catalyses IMP + L-aspartate + GTP = N(6)-(1,2-dicarboxyethyl)-AMP + GDP + phosphate + 2 H(+). It functions in the pathway purine metabolism; AMP biosynthesis via de novo pathway; AMP from IMP: step 1/2. Functionally, plays an important role in the de novo pathway and in the salvage pathway of purine nucleotide biosynthesis. Catalyzes the first committed step in the biosynthesis of AMP from IMP. The protein is Adenylosuccinate synthetase, chloroplastic of Oryza sativa subsp. indica (Rice).